We begin with the raw amino-acid sequence, 674 residues long: Protein tesmin/TSO1-like CXC 2 (674 aa).

Composition is skewed to polar residues over residues 1–16 and 76–89; these read MDTP…TPIS and THNS…NSVE. 2 disordered regions span residues 1–20 and 69–113; these read MDTP…KSRF and KESR…GLNI. Positions 95-109 are enriched in basic and acidic residues; that stretch reads STSHEEVPAEGEDTK. The CRC domain maps to 373–498; sequence SCKRCNCKKS…RCEGCKNAFG (126 aa). Disordered regions lie at residues 504-529 and 623-655; these read SIDM…SQQN and IPNI…RRNG. The span at 507–516 shows a compositional bias: acidic residues; the sequence is MEAEQEEENE.

This sequence belongs to the lin-54 family. Ubiquitous but expressed mostly in all the aerial organs with highest expression in flowers.

The protein localises to the nucleus. Functionally, plays a role in development of both male and female reproductive tissues. The sequence is that of Protein tesmin/TSO1-like CXC 2 (TCX2) from Arabidopsis thaliana (Mouse-ear cress).